A 603-amino-acid polypeptide reads, in one-letter code: NADH-quinone oxidoreductase subunit C/D (603 aa).

The segment at 1 to 193 is NADH dehydrogenase I subunit C; the sequence is MVNNMTDLTA…DPFTLTKQKE (193 aa). Positions 217–603 are NADH dehydrogenase I subunit D; it reads DFMFLNLGPN…IDFVMSDVDR (387 aa).

In the N-terminal section; belongs to the complex I 30 kDa subunit family. It in the C-terminal section; belongs to the complex I 49 kDa subunit family. In terms of assembly, NDH-1 is composed of 13 different subunits. Subunits NuoB, CD, E, F, and G constitute the peripheral sector of the complex.

The protein localises to the cell inner membrane. It carries out the reaction a quinone + NADH + 5 H(+)(in) = a quinol + NAD(+) + 4 H(+)(out). In terms of biological role, NDH-1 shuttles electrons from NADH, via FMN and iron-sulfur (Fe-S) centers, to quinones in the respiratory chain. The immediate electron acceptor for the enzyme in this species is believed to be ubiquinone. Couples the redox reaction to proton translocation (for every two electrons transferred, four hydrogen ions are translocated across the cytoplasmic membrane), and thus conserves the redox energy in a proton gradient. This chain is NADH-quinone oxidoreductase subunit C/D, found in Cronobacter sakazakii (strain ATCC BAA-894) (Enterobacter sakazakii).